We begin with the raw amino-acid sequence, 619 residues long: Protein DFG16 (619 aa).

Position 1 (Met1) is a topological domain, extracellular. A helical transmembrane segment spans residues Ile2–Ala22. Topologically, residues Tyr23–Met167 are cytoplasmic. Residues Pro33 to Asp54 are disordered. Basic and acidic residues predominate over residues Lys44 to Asp54. Residues Ile168–Leu188 form a helical membrane-spanning segment. Residues Leu189 to Val203 lie on the Extracellular side of the membrane. A helical membrane pass occupies residues Tyr204–Phe224. Over Asp225 to His291 the chain is Cytoplasmic. A helical membrane pass occupies residues Ile292–Leu312. The Extracellular portion of the chain corresponds to Trp313 to Lys321. Residues Val322–Phe342 form a helical membrane-spanning segment. Topologically, residues Thr343 to Thr378 are cytoplasmic. Residues Ile379–Phe399 traverse the membrane as a helical segment. At Ala400–Thr410 the chain is on the extracellular side. Residues Phe411 to Val431 form a helical membrane-spanning segment. Over Leu432–Asp619 the chain is Cytoplasmic. Composition is skewed to polar residues over residues Lys485–Trp504 and Lys526–Lys549. Disordered stretches follow at residues Lys485–Ser506 and Ile520–His586. Basic residues predominate over residues Gln552–Thr561.

The protein resides in the membrane. In terms of biological role, involved in invasion during filamentous growth. This chain is Protein DFG16 (DFG16), found in Saccharomyces cerevisiae (strain ATCC 204508 / S288c) (Baker's yeast).